The primary structure comprises 597 residues: Ribosomal oxygenase 1 (597 aa).

Methionine 1 bears the N-acetylmethionine mark. The disordered stretch occupies residues methionine 1 to aspartate 138. Basic residues-rich tracts occupy residues lysine 14 to proline 24 and arginine 37 to alanine 48. Residues alanine 49–serine 62 are compositionally biased toward low complexity. Residues serine 62 and serine 65 each carry the phosphoserine modification. A compositionally biased stretch (basic and acidic residues) spans valine 72–glutamate 81. Serine 86 is modified (phosphoserine). The JmjC domain maps to cysteine 250–alanine 395. Histidine 296, aspartate 298, and histidine 361 together coordinate Fe cation.

It belongs to the ROX family. NO66 subfamily. In terms of assembly, interacts with SP7/OSX; the interaction is direct. Interacts with MYC. Interacts with PHF19; leading to its recruitment to H3K36me3 sites. Fe(2+) is required as a cofactor.

It is found in the nucleus. The protein resides in the nucleolus. It localises to the nucleoplasm. The catalysed reaction is N(6),N(6)-dimethyl-L-lysyl(36)-[histone H3] + 2 2-oxoglutarate + 2 O2 = L-lysyl(36)-[histone H3] + 2 formaldehyde + 2 succinate + 2 CO2. The enzyme catalyses N(6)-methyl-L-lysyl-[protein] + 2-oxoglutarate + O2 = L-lysyl-[protein] + formaldehyde + succinate + CO2. It catalyses the reaction L-histidyl-[protein] + 2-oxoglutarate + O2 = (3S)-3-hydroxy-L-histidyl-[protein] + succinate + CO2. Functionally, oxygenase that can act as both a histone lysine demethylase and a ribosomal histidine hydroxylase. Specifically demethylates 'Lys-4' (H3K4me) and 'Lys-36' (H3K36me) of histone H3, thereby playing a central role in histone code. Preferentially demethylates trimethylated H3 'Lys-4' (H3K4me3) and monomethylated H3 'Lys-4' (H3K4me1) residues, while it has weaker activity for dimethylated H3 'Lys-36' (H3K36me2). Acts as a regulator of osteoblast differentiation via its interaction with SP7/OSX by demethylating H3K4me and H3K36me, thereby inhibiting SP7/OSX-mediated promoter activation. Also catalyzes demethylation of non-histone proteins, such as CGAS: demethylation of monomethylated CGAS promotes interaction between CGAS and PARP1, followed by PARP1 inactivation. Also catalyzes the hydroxylation of 60S ribosomal protein L8 on 'His-216', thereby playing a role in ribosome biogenesis. Participates in MYC-induced transcriptional activation. This Rattus norvegicus (Rat) protein is Ribosomal oxygenase 1.